A 205-amino-acid polypeptide reads, in one-letter code: Adenylyl-sulfate kinase (205 aa).

35-42 (GLSGAGKS) serves as a coordination point for ATP. Ser-109 serves as the catalytic Phosphoserine intermediate.

It belongs to the APS kinase family.

It catalyses the reaction adenosine 5'-phosphosulfate + ATP = 3'-phosphoadenylyl sulfate + ADP + H(+). It functions in the pathway sulfur metabolism; hydrogen sulfide biosynthesis; sulfite from sulfate: step 2/3. Functionally, catalyzes the synthesis of activated sulfate. The sequence is that of Adenylyl-sulfate kinase from Acaryochloris marina (strain MBIC 11017).